A 315-amino-acid chain; its full sequence is Prephenate dehydratase (315 aa).

One can recognise a Prephenate dehydratase domain in the interval 7–190 (VVAYLGPAGT…ARTRFVAVQA (184 aa)). The 80-residue stretch at 204–283 (SVIFSLPNVP…LVFVGSWPSN (80 aa)) folds into the ACT domain.

It carries out the reaction prephenate + H(+) = 3-phenylpyruvate + CO2 + H2O. It participates in amino-acid biosynthesis; L-phenylalanine biosynthesis; phenylpyruvate from prephenate: step 1/1. This chain is Prephenate dehydratase (pheA), found in Corynebacterium glutamicum (strain ATCC 13032 / DSM 20300 / JCM 1318 / BCRC 11384 / CCUG 27702 / LMG 3730 / NBRC 12168 / NCIMB 10025 / NRRL B-2784 / 534).